A 123-amino-acid chain; its full sequence is Antitoxin RnlB (123 aa).

In terms of assembly, can form a complex with cognate toxin RnlA. Post-translationally, probably degraded by CplXP and Lon proteases.

In terms of biological role, antitoxin component of a type II toxin-antitoxin (TA) system. A labile antitoxin (half-life of 2.1 minutes) that inhibits the endonuclease activity of cognate toxin RnlA but not that of non-cognate toxin LsoA. The polypeptide is Antitoxin RnlB (rnlB) (Escherichia coli (strain K12)).